The primary structure comprises 197 residues: NAD(P)H-quinone oxidoreductase subunit 6, chloroplastic (197 aa).

Transmembrane regions (helical) follow at residues 10–30 (FVLALVELGILLGSLGAVLLV), 39–59 (LGLVFTCISLLYFVLNADFVA), 60–80 (AAQLLVYVGAINVLTVFAVMI), 94–114 (IGYIITAGTCTILFSILSFVI), and 147–167 (LLGEFVIPFELLSILLLAALV).

The protein belongs to the complex I subunit 6 family. NDH is composed of at least 16 different subunits, 5 of which are encoded in the nucleus.

It localises to the plastid. Its subcellular location is the chloroplast thylakoid membrane. The catalysed reaction is a plastoquinone + NADH + (n+1) H(+)(in) = a plastoquinol + NAD(+) + n H(+)(out). It carries out the reaction a plastoquinone + NADPH + (n+1) H(+)(in) = a plastoquinol + NADP(+) + n H(+)(out). Its function is as follows. NDH shuttles electrons from NAD(P)H:plastoquinone, via FMN and iron-sulfur (Fe-S) centers, to quinones in the photosynthetic chain and possibly in a chloroplast respiratory chain. The immediate electron acceptor for the enzyme in this species is believed to be plastoquinone. Couples the redox reaction to proton translocation, and thus conserves the redox energy in a proton gradient. This chain is NAD(P)H-quinone oxidoreductase subunit 6, chloroplastic (ndhG), found in Adiantum capillus-veneris (Maidenhair fern).